Here is a 1082-residue protein sequence, read N- to C-terminus: RE1-silencing transcription factor (1082 aa).

The tract at residues 32 to 117 (DLHELSKAEL…SLELSAVEPQ (86 aa)) is interaction with SIN3A. Positions 43-57 (APQLIMLANVALTGE) are interaction with SIN3B. The tract at residues 140 to 413 (PVAEDKCRSS…KSKHPTCPSK (274 aa)) is interaction with ZFP90. The C2H2-type 1 zinc-finger motif lies at 154 to 176 (FRCKPCQYEAESEEQFVHHIRIH). Residues 196 to 207 (SGSSPAEEGEFS) form a required for binding to the neuron-restrictive silencer element region. C2H2-type zinc fingers lie at residues 211-235 (IRCD…HHLR), 243-265 (YKCI…LRNH), 271-293 (YTCS…VRTH), 299-321 (YKCE…MRTH), 327-350 (FKCD…RQVH), 356-378 (LNCP…VELH), and 384-407 (FNCP…KSKH). 2 disordered regions span residues 408 to 809 (PTCP…ELSL) and 831 to 1027 (SKLL…KAGL). Positions 440–475 (EKMENEQTKTKGDVSGKKNEKPVKAVGKDASKEKKP) are enriched in basic and acidic residues. Residues 477-497 (SSVSVVQVTTRTRKSAVAAET) are compositionally biased toward low complexity. Positions 581–597 (KGTKKTPPKTKTSKKGG) are enriched in basic residues. Residues 630–640 (VTGSGSSQTEL) show a composition bias toward polar residues. Composition is skewed to pro residues over residues 684-713 (YPQP…PAPP) and 729-751 (KEPP…PPPM). Basic and acidic residues-rich tracts occupy residues 798 to 807 (LRKDRAEKEL) and 854 to 864 (NSREETPKDQE). The segment covering 900–909 (RVSSSEQNSA) has biased composition (polar residues). Residue Ser950 is modified to Phosphoserine. The interaction with RCOR1 stretch occupies residues 985–1063 (EGIHSHDGSD…HLNRHLVNVY (79 aa)). The segment at 1036 to 1058 (FVCIFCDRSFRKEKDYSKHLNRH) adopts a C2H2-type 9 zinc-finger fold.

In terms of assembly, isoform 1 and isoform 2 form heterodimers. Isoform 2: Forms homodimers and homooligomers; binds to the neuron-restrictive silencer element (NRSE) as monomer. Interacts with SIN3A, SIN3B and RCOR1. Interacts with CDYL. Interacts with EHMT1 and EHMT2 only in the presence of CDYL. Part of a complex containing at least CDYL, REST, WIZ, SETB1, EHMT1 and EHMT2. Interacts (via zinc-finger DNA-binding domain) with ZFP90 (via N- and C-termini); the interaction inhibits REST repressor activity. Interacts (via C2H2-type zinc finger 5) with PRICKLE1. Interacts with FBXW11 and BTRC. Interacts with USP7. In terms of processing, O-glycosylated. Phosphorylated; phosphorylation is required for ubiquitination. Post-translationally, ubiquitinated; ubiquitination is mediated by BTRC and leads to proteasomal degradation in G2 phase. Ubiquitination increases during neuronal differentiation. Deubiquitinated by USP7; leading to its stabilization and promoting the maintenance of neural progenitor cells. In terms of tissue distribution, expressed in the hippocampus, including quiescent neuronal progenitor (QNP) cells, transient-amplifying progenitor (TAP) cells, neuroblasts and mature neurons (at protein level). Expressed in embryonic stem cells (at protein level). Expressed in many non-neuronal tissues including the heart and liver. Abundantly expressed in osteoblastic lineage cells. Expressed in the spleen, kidney, blood cells, cortex, neocortex and in the utricle, saccule and organ of Corti of the inner ear. Isoform 2: Expressed in the cortex, neocortex and in the utricle, saccule and organ of Corti of the inner ear.

It localises to the nucleus. The protein localises to the cytoplasm. In terms of biological role, transcriptional repressor which binds neuron-restrictive silencer element (NRSE) and represses neuronal gene transcription in non-neuronal cells. Restricts the expression of neuronal genes by associating with two distinct corepressors, SIN3A and RCOR1, which in turn recruit histone deacetylase to the promoters of REST-regulated genes. Mediates repression by recruiting the BHC complex at RE1/NRSE sites which acts by deacetylating and demethylating specific sites on histones, thereby acting as a chromatin modifier. Transcriptional repression by REST-CDYL via the recruitment of histone methyltransferase EHMT2 may be important in transformation suppression. Represses the expression of SRRM4 in non-neural cells to prevent the activation of neural-specific splicing events and to prevent production of REST isoform 2. Repressor activity may be inhibited by forming heterodimers with isoform 2, thereby preventing binding to NRSE or binding to corepressors and leading to derepression of target genes. Also maintains repression of neuronal genes in neural stem cells, and allows transcription and differentiation into neurons by dissociation from RE1/NRSE sites of target genes. Thereby is involved in maintaining the quiescent state of adult neural stem cells and preventing premature differentiation into mature neurons. Plays a role in the developmental switch in synaptic NMDA receptor composition during postnatal development, by repressing GRIN2B expression and thereby altering NMDA receptor properties from containing primarily GRIN2B to primarily GRIN2A subunits. Acts as a regulator of osteoblast differentiation. Key repressor of gene expression in hypoxia; represses genes in hypoxia by direct binding to an RE1/NRSE site on their promoter regions. May also function in stress resistance in the brain during aging; possibly by regulating expression of genes involved in cell death and in the stress response. Repressor of gene expression in the hippocampus after ischemia by directly binding to RE1/NRSE sites and recruiting SIN3A and RCOR1 to promoters of target genes, thereby promoting changes in chromatin modifications and ischemia-induced cell death. After ischemia, might play a role in repression of miR-132 expression in hippocampal neurons, thereby leading to neuronal cell death. Functionally, binds to the 3' region of the neuron-restrictive silencer element (NRSE), with lower affinity than isoform 1. Exhibits weaker repressor activity compared to isoform 1. May negatively regulate the repressor activity of isoform 1 by binding to isoform 1, thereby preventing its binding to NRSE and leading to derepression of target genes. However, in another study, does not appear to be implicated in repressor activity of a NRSE motif-containing reporter construct nor in inhibitory activity on the isoform 1 transcriptional repressor activity. Post-transcriptional inactivation of REST by SRRM4-dependent alternative splicing into isoform 2 is required in mechanosensory hair cells in the inner ear for derepression of neuronal genes, maintenance of hair cells and hearing. This Mus musculus (Mouse) protein is RE1-silencing transcription factor (Rest).